The primary structure comprises 101 residues: Protein Tat (101 aa).

The segment at 1 to 24 is interaction with human CREBBP; sequence MEPVDPNREPWNHPGSQPKTACTN. Residues 1-48 form a transactivation region; that stretch reads MEPVDPNREPWNHPGSQPKTACTNCYCKKCCYHCQVCFLQKGLGISYG. The Zn(2+) site is built by Cys22, Cys25, and Cys27. Positions 22-37 are cysteine-rich; sequence CTNCYCKKCCYHCQVC. Residue Lys28 is modified to N6-acetyllysine; by host PCAF. Zn(2+) is bound by residues Cys30, His33, Cys34, and Cys37. The interval 38-48 is core; the sequence is FLQKGLGISYG. The interval 48 to 101 is disordered; sequence GRKKRRQRRSAPPGSKNHQDLIPEQPLFQTQRKPTGPEESKKEVESKAEPDRFD. The short motif at 49 to 57 is the Nuclear localization signal, RNA-binding (TAR), and protein transduction element; sequence RKKRRQRRS. The tract at residues 49–86 is interaction with the host capping enzyme RNGTT; it reads RKKRRQRRSAPPGSKNHQDLIPEQPLFQTQRKPTGPEE. An N6-acetyllysine; by host EP300 and GCN5L2 mark is found at Lys50 and Lys51. An asymmetric dimethylarginine; by host PRMT6 mark is found at Arg52 and Arg53. The segment covering 82–101 has biased composition (basic and acidic residues); the sequence is TGPEESKKEVESKAEPDRFD.

The protein belongs to the lentiviruses Tat family. In terms of assembly, interacts with host CCNT1. Associates with the P-TEFb complex composed at least of Tat, P-TEFb (CDK9 and CCNT1), TAR RNA, RNA Pol II. Recruits the HATs CREBBP, TAF1/TFIID, EP300, PCAF and GCN5L2. Interacts with host KAT5/Tip60; this interaction targets the latter to degradation. Interacts with the host deacetylase SIRT1. Interacts with host capping enzyme RNGTT; this interaction stimulates RNGTT. Binds to host KDR, and to the host integrins ITGAV/ITGB3 and ITGA5/ITGB1. Interacts with host KPNB1/importin beta-1 without previous binding to KPNA1/importin alpha-1. Interacts with EIF2AK2. Interacts with host nucleosome assembly protein NAP1L1; this interaction may be required for the transport of Tat within the nucleus, since the two proteins interact at the nuclear rim. Interacts with host C1QBP/SF2P32; this interaction involves lysine-acetylated Tat. Interacts with the host chemokine receptors CCR2, CCR3 and CXCR4. Interacts with host DPP4/CD26; this interaction may trigger an anti-proliferative effect. Interacts with host LDLR. Interacts with the host extracellular matrix metalloproteinase MMP1. Interacts with host PRMT6; this interaction mediates Tat's methylation. Interacts with, and is ubiquitinated by MDM2/Hdm2. Interacts with host PSMC3 and HTATIP2. Interacts with STAB1; this interaction may overcome SATB1-mediated repression of IL2 and IL2RA (interleukin) in T cells by binding to the same domain than HDAC1. Interacts (when acetylated) with human CDK13, thereby increasing HIV-1 mRNA splicing and promoting the production of the doubly spliced HIV-1 protein Nef. Interacts with host TBP; this interaction modulates the activity of transcriptional pre-initiation complex. Interacts with host RELA. Interacts with host PLSCR1; this interaction negatively regulates Tat transactivation activity by altering its subcellular distribution. In terms of processing, asymmetrical arginine methylation by host PRMT6 seems to diminish the transactivation capacity of Tat and affects the interaction with host CCNT1. Post-translationally, acetylation by EP300, CREBBP, GCN5L2/GCN5 and PCAF regulates the transactivation activity of Tat. EP300-mediated acetylation of Lys-50 promotes dissociation of Tat from the TAR RNA through the competitive binding to PCAF's bromodomain. In addition, the non-acetylated Tat's N-terminus can also interact with PCAF. PCAF-mediated acetylation of Lys-28 enhances Tat's binding to CCNT1. Lys-50 is deacetylated by SIRT1. Polyubiquitination by host MDM2 does not target Tat to degradation, but activates its transactivation function and fosters interaction with CCNT1 and TAR RNA. In terms of processing, phosphorylated by EIF2AK2 on serine and threonine residues adjacent to the basic region important for TAR RNA binding and function. Phosphorylation of Tat by EIF2AK2 is dependent on the prior activation of EIF2AK2 by dsRNA.

It is found in the host nucleus. It localises to the host nucleolus. The protein localises to the host cytoplasm. The protein resides in the secreted. Functionally, transcriptional activator that increases RNA Pol II processivity, thereby increasing the level of full-length viral transcripts. Recognizes a hairpin structure at the 5'-LTR of the nascent viral mRNAs referred to as the transactivation responsive RNA element (TAR) and recruits the cyclin T1-CDK9 complex (P-TEFb complex) that will in turn hyperphosphorylate the RNA polymerase II to allow efficient elongation. The CDK9 component of P-TEFb and other Tat-activated kinases hyperphosphorylate the C-terminus of RNA Pol II that becomes stabilized and much more processive. Other factors such as HTATSF1/Tat-SF1, SUPT5H/SPT5, and HTATIP2 are also important for Tat's function. Besides its effect on RNA Pol II processivity, Tat induces chromatin remodeling of proviral genes by recruiting the histone acetyltransferases (HATs) CREBBP, EP300 and PCAF to the chromatin. This also contributes to the increase in proviral transcription rate, especially when the provirus integrates in transcriptionally silent region of the host genome. To ensure maximal activation of the LTR, Tat mediates nuclear translocation of NF-kappa-B by interacting with host RELA. Through its interaction with host TBP, Tat may also modulate transcription initiation. Tat can reactivate a latently infected cell by penetrating in it and transactivating its LTR promoter. In the cytoplasm, Tat is thought to act as a translational activator of HIV-1 mRNAs. Its function is as follows. Extracellular circulating Tat can be endocytosed by surrounding uninfected cells via the binding to several surface receptors such as CD26, CXCR4, heparan sulfate proteoglycans (HSPG) or LDLR. Neurons are rarely infected, but they internalize Tat via their LDLR. Through its interaction with nuclear HATs, Tat is potentially able to control the acetylation-dependent cellular gene expression. Modulates the expression of many cellular genes involved in cell survival, proliferation or in coding for cytokines or cytokine receptors. Tat plays a role in T-cell and neurons apoptosis. Tat induced neurotoxicity and apoptosis probably contribute to neuroAIDS. Circulating Tat also acts as a chemokine-like and/or growth factor-like molecule that binds to specific receptors on the surface of the cells, affecting many cellular pathways. In the vascular system, Tat binds to ITGAV/ITGB3 and ITGA5/ITGB1 integrins dimers at the surface of endothelial cells and competes with bFGF for heparin-binding sites, leading to an excess of soluble bFGF. This Human immunodeficiency virus type 1 group M subtype J (isolate SE9173) (HIV-1) protein is Protein Tat.